A 296-amino-acid polypeptide reads, in one-letter code: 4-hydroxybenzoate octaprenyltransferase (296 aa).

The next 8 membrane-spanning stretches (helical) occupy residues 28-48 (IGTL…SDGI), 51-71 (LAVL…GCVI), 102-122 (LLLT…LNHL), 143-163 (FFPI…PMAF), 174-194 (AWIL…VYAM), 212-232 (FGRY…LLMA), 233-253 (VLGA…IVLL), and 274-294 (FLAN…HTFF).

Belongs to the UbiA prenyltransferase family. The cofactor is Mg(2+).

The protein resides in the cell inner membrane. The enzyme catalyses all-trans-octaprenyl diphosphate + 4-hydroxybenzoate = 4-hydroxy-3-(all-trans-octaprenyl)benzoate + diphosphate. It functions in the pathway cofactor biosynthesis; ubiquinone biosynthesis. Its function is as follows. Catalyzes the prenylation of para-hydroxybenzoate (PHB) with an all-trans polyprenyl group. Mediates the second step in the final reaction sequence of ubiquinone-8 (UQ-8) biosynthesis, which is the condensation of the polyisoprenoid side chain with PHB, generating the first membrane-bound Q intermediate 3-octaprenyl-4-hydroxybenzoate. The polypeptide is 4-hydroxybenzoate octaprenyltransferase (Neisseria meningitidis serogroup B (strain ATCC BAA-335 / MC58)).